We begin with the raw amino-acid sequence, 331 residues long: CRISPR-associated endonuclease Cas1 1 (331 aa).

3 residues coordinate Mn(2+): E161, H226, and E241.

This sequence belongs to the CRISPR-associated endonuclease Cas1 family. As to quaternary structure, homodimer, forms a heterotetramer with a Cas2 homodimer. Requires Mg(2+) as cofactor. Mn(2+) serves as cofactor.

In terms of biological role, CRISPR (clustered regularly interspaced short palindromic repeat), is an adaptive immune system that provides protection against mobile genetic elements (viruses, transposable elements and conjugative plasmids). CRISPR clusters contain spacers, sequences complementary to antecedent mobile elements, and target invading nucleic acids. CRISPR clusters are transcribed and processed into CRISPR RNA (crRNA). Acts as a dsDNA endonuclease. Involved in the integration of spacer DNA into the CRISPR cassette. The chain is CRISPR-associated endonuclease Cas1 1 from Methanospirillum hungatei JF-1 (strain ATCC 27890 / DSM 864 / NBRC 100397 / JF-1).